A 418-amino-acid chain; its full sequence is DnaJ protein homolog 2 (418 aa).

In terms of domain architecture, J spans 11–76; sequence NTKYYEVLGV…REIYDQYGEE (66 aa). The segment at 135–219 adopts a CR-type zinc-finger fold; it reads GTSKKLSLSR…CKGEKVVQQK (85 aa). CXXCXGXG motif repeat units follow at residues 148-155, 164-171, 191-198, and 207-214; these read CTKCKGKG, CASCQGSG, CNECKGTG, and CPQCKGEK. The disordered stretch occupies residues 382-418; that stretch reads VNIEEEMRRKQHQQAQEAYDEDDEGHGGAQRVQCAQQ. Cysteine 415 carries the cysteine methyl ester modification. Cysteine 415 is lipidated: S-farnesyl cysteine. A propeptide spans 416 to 418 (removed in mature form); the sequence is AQQ.

It is found in the membrane. Its function is as follows. Plays a continuous role in plant development probably in the structural organization of compartments. This is DnaJ protein homolog 2 (LDJ2) from Allium porrum (Leek).